The chain runs to 380 residues: MDVLNLFNETIKVGAFNATQLVEAYVISIFSLTTFVGLAITLYLGIAYLYKKPADQVVGLVCCDVLIVNAVCLITLPLWVYQAATKKWFGGEFMCKFAGMFYTMNVYMSVWSCVIVTFDRWYCMMCKNLQAVTVLGRTIRTNQVVTILTLLVTFIGLFSLTETSIVDKKCYLYSGDSLLSFVNAALGYTVPWLAIAIMIVHIILRTSRLDYDPKWLNTNILMWMMFTLLVTQGPYYSLSAYMGNFKSFVEKNMTHHSNKVTASYFHGDASHSIQVAMLVCTHALAITRMFSVPLILSTLAGYEPLYVWKRITRCCCMRVEYENLEDESQSKLLRGEENPNYDYSPKSVRIKPLKSPGGGDNSSLKDEGYDEESQNGFSIG.

7 helical membrane-spanning segments follow: residues 26-46 (VISI…YLGI), 60-80 (LVCC…PLWV), 97-117 (FAGM…VIVT), 145-165 (VTIL…ETSI), 184-204 (AALG…HIIL), 220-240 (ILMW…SLSA), and 275-295 (VAML…VPLI). Cys95 and Cys170 are joined by a disulfide. The disordered stretch occupies residues 328–380 (SQSKLLRGEENPNYDYSPKSVRIKPLKSPGGGDNSSLKDEGYDEESQNGFSIG).

Belongs to the G-protein coupled receptor 1 family.

Its subcellular location is the host membrane. The protein is G-protein coupled receptor of Elephas maximus (Indian elephant).